Here is a 147-residue protein sequence, read N- to C-terminus: Hemoglobin subunit epsilon (147 aa).

The Globin domain occupies 3-147 (HFTAEEKAAI…VAIALGHKYH (145 aa)). Phosphoserine occurs at positions 14 and 51. Residues H64 and H93 each coordinate heme b.

It belongs to the globin family. In terms of assembly, heterotetramer of two alpha chains and two epsilon chains in early embryonic hemoglobin Gower-2; two zeta chains and two epsilon chains in early embryonic hemoglobin Gower-1. As to expression, red blood cells.

In terms of biological role, the epsilon chain is a beta-type chain of early mammalian embryonic hemoglobin. The protein is Hemoglobin subunit epsilon (HBE1) of Alouatta belzebul (Red-handed howler monkey).